Consider the following 625-residue polypeptide: Inactive glucose-6-phosphate 1-dehydrogenase 4, chloroplastic (625 aa).

The N-terminal 49 residues, 1-49 (MSLSSCLLPFSQSATAPSSSVCSCHLAASFSNFPVSSRDYSFSRSGSLV), are a transit peptide targeting the chloroplast. NADP(+)-binding positions include 160-167 (GATGELAR) and Arg-194. A disulfide bridge connects residues Cys-212 and Cys-220. NADP(+) is bound at residue Lys-297. Residues Lys-297, 327-331 (HMLGR), Glu-365, and Asp-382 contribute to the D-glucose 6-phosphate site. His-387 functions as the Proton acceptor in the catalytic mechanism. NADP(+) is bound by residues Arg-471, Arg-480, Arg-513, and Arg-606.

It belongs to the glucose-6-phosphate dehydrogenase family. As to quaternary structure, forms homodimer. Interacts with G6PD1. In terms of tissue distribution, expressed in leaves, stems and buds.

The protein localises to the plastid. It is found in the chloroplast stroma. In terms of biological role, seems to be a catalytically inactive enzyme. This Arabidopsis thaliana (Mouse-ear cress) protein is Inactive glucose-6-phosphate 1-dehydrogenase 4, chloroplastic.